A 661-amino-acid chain; its full sequence is UvrABC system protein B (661 aa).

One can recognise a Helicase ATP-binding domain in the interval 25 to 182 (KGLNNKKRSQ…NDLVNLQYER (158 aa)). ATP is bound at residue 38 to 45 (GITGSGKT). Residues 91-114 (YYDYYQPEAYIPKTDVFIEKDSSI) carry the Beta-hairpin motif. The Helicase C-terminal domain occupies 430–592 (QVEDLVGEIQ…IIPKTINRTI (163 aa)). Residues 621–656 (KAHIDKLRKEMLKAASNLEFEQAAKLRDQLKTLEEA) enclose the UVR domain.

The protein belongs to the UvrB family. As to quaternary structure, forms a heterotetramer with UvrA during the search for lesions. Interacts with UvrC in an incision complex.

The protein localises to the cytoplasm. The UvrABC repair system catalyzes the recognition and processing of DNA lesions. A damage recognition complex composed of 2 UvrA and 2 UvrB subunits scans DNA for abnormalities. Upon binding of the UvrA(2)B(2) complex to a putative damaged site, the DNA wraps around one UvrB monomer. DNA wrap is dependent on ATP binding by UvrB and probably causes local melting of the DNA helix, facilitating insertion of UvrB beta-hairpin between the DNA strands. Then UvrB probes one DNA strand for the presence of a lesion. If a lesion is found the UvrA subunits dissociate and the UvrB-DNA preincision complex is formed. This complex is subsequently bound by UvrC and the second UvrB is released. If no lesion is found, the DNA wraps around the other UvrB subunit that will check the other stand for damage. The protein is UvrABC system protein B of Rickettsia bellii (strain RML369-C).